The chain runs to 302 residues: Dihydroorotate dehydrogenase B (NAD(+)), catalytic subunit (302 aa).

Residues Ser-23 and 47–48 contribute to the FMN site; that span reads KG. Substrate is bound by residues Lys-47 and 71–75; that span reads NSVGL. FMN is bound by residues Asn-101 and Asn-128. Asn-128 provides a ligand contact to substrate. Cys-131 serves as the catalytic Nucleophile. The FMN site is built by Lys-166 and Ile-192. Substrate is bound at residue 193-194; that stretch reads NT. FMN-binding positions include Gly-218, 244–245, and 266–267; these read GG and GT.

This sequence belongs to the dihydroorotate dehydrogenase family. Type 1 subfamily. Heterotetramer of 2 PyrK and 2 PyrD type B subunits. FMN serves as cofactor.

Its subcellular location is the cytoplasm. It carries out the reaction (S)-dihydroorotate + NAD(+) = orotate + NADH + H(+). It participates in pyrimidine metabolism; UMP biosynthesis via de novo pathway; orotate from (S)-dihydroorotate (NAD(+) route): step 1/1. Its function is as follows. Catalyzes the conversion of dihydroorotate to orotate with NAD(+) as electron acceptor. The polypeptide is Dihydroorotate dehydrogenase B (NAD(+)), catalytic subunit (pyrD) (Alkaliphilus metalliredigens (strain QYMF)).